We begin with the raw amino-acid sequence, 94 residues long: uncharacterized protein (94 aa).

Residues Met1–Ala25 form the signal peptide.

This is an uncharacterized protein from Archaeoglobus fulgidus (strain ATCC 49558 / DSM 4304 / JCM 9628 / NBRC 100126 / VC-16).